The chain runs to 193 residues: MNLVPTVIEQTNRGERAYDIYSRLLKDRIILLGSGIDDNVSNSIVAQLLFLEAEDPDKDISLYINSPGGSITAGMAIYDTMNFIKPNVSTICIGMAASMGAFLLTAGEKGKRFALPNSEIMIHQPLGGTQGQATDIEIHAKRIIDIKRRMNEIMAEKTGQPIEVIERDTERDNFMTADQSVEYGLIDKILERK.

Ser-98 functions as the Nucleophile in the catalytic mechanism. Residue His-123 is part of the active site.

Belongs to the peptidase S14 family. In terms of assembly, fourteen ClpP subunits assemble into 2 heptameric rings which stack back to back to give a disk-like structure with a central cavity, resembling the structure of eukaryotic proteasomes.

It is found in the cytoplasm. The catalysed reaction is Hydrolysis of proteins to small peptides in the presence of ATP and magnesium. alpha-casein is the usual test substrate. In the absence of ATP, only oligopeptides shorter than five residues are hydrolyzed (such as succinyl-Leu-Tyr-|-NHMec, and Leu-Tyr-Leu-|-Tyr-Trp, in which cleavage of the -Tyr-|-Leu- and -Tyr-|-Trp bonds also occurs).. Its function is as follows. Cleaves peptides in various proteins in a process that requires ATP hydrolysis. Has a chymotrypsin-like activity. Plays a major role in the degradation of misfolded proteins. ClpXP is involved in the complete degradation of the Site-2 clipped anti-sigma-W factor RsiW. This results in the release of SigW and the transcription activation of the genes under the control of the sigma-W factor. The polypeptide is ATP-dependent Clp protease proteolytic subunit (Oceanobacillus iheyensis (strain DSM 14371 / CIP 107618 / JCM 11309 / KCTC 3954 / HTE831)).